The primary structure comprises 286 residues: Simplagrin (286 aa).

The N-terminal stretch at 1–20 (MKKFCLIFLLLALTALHVKG) is a signal peptide. The disordered stretch occupies residues 17-179 (HVKGSPIPDE…GSSSGGEESA (163 aa)). Acidic residues-rich tracts occupy residues 24 to 69 (PDEE…DGQE) and 103 to 129 (VESG…TGGE). The N-linked (GlcNAc...) asparagine glycan is linked to asparagine 116. Over residues 166–177 (SNRAGSSSGGEE) the composition is skewed to low complexity.

Belongs to the aegyptin family. Monomeric in solution; likely has an elongated non-globular form. Interacts with human and rat collagens (via a RGQOGVMGF peptide, where O is hydroxyproline). Post-translationally, not glycosylated. Salivary gland.

The protein localises to the secreted. In terms of biological role, inhibits host platelet aggregation induced by low concentrations of collagen via blocking the von Willebrand Factor (VWF) interaction with collagen. This is Simplagrin from Simulium nigrimanum (Black fly).